The chain runs to 439 residues: MQPATRSIAVAGPASAALRTATTPFICLGCRSVQRKQQRRLFSSTVSTQTDLRAGLTKLTSRRLISVSGPDASKFLQGVITNNINAPHNANGFYTGFLTAQGRVVHDVIIYPDDLGPEPGKQSFLIEVDADEAATLHKHIKRYKLRSKFNLKLLDPEERALYHSWNDVDQAGPWTKLIDEVQNAGNARAVPDPRVPAFGSRVVVNQTSSSSPLTDGDLTPESSYHLRRFLLGIPEGQSEIISGTALPLESNMDVMNGIDFRKGCYVGQELTIRTKHRGVVRKRILPCILYYEGAAPEIPADGPGQLEALEKLLKPEVEQGVKAEMIPQGASIDKVDKKSRSAPGKWLRGIGNVGLALCRLEVMTDTVLPGETPGTYSPEQDFVVSLGGEEGSEVEAKKVKVKAFVPFWLKDVWRIEAEKAEEERRMREELLRDRGLDVE.

The N-terminal 72 residues, 1 to 72 (MQPATRSIAV…RLISVSGPDA (72 aa)), are a transit peptide targeting the mitochondrion.

It belongs to the GcvT family. CAF17/IBA57 subfamily.

It localises to the mitochondrion matrix. This chain is Iron-sulfur cluster assembly factor IBA57 homolog, mitochondrial (caf-17), found in Neurospora crassa (strain ATCC 24698 / 74-OR23-1A / CBS 708.71 / DSM 1257 / FGSC 987).